A 263-amino-acid polypeptide reads, in one-letter code: 4-hydroxy-2-oxo-heptane-1,7-dioate aldolase (263 aa).

Histidine 45 serves as the catalytic Proton acceptor. Position 147 (glutamine 147) interacts with substrate. Residue glutamate 149 participates in a divalent metal cation binding. Positions 174 and 175 each coordinate substrate. Aspartate 175 lines the a divalent metal cation pocket.

Belongs to the HpcH/HpaI aldolase family. In terms of assembly, homohexamer; trimer of dimers. A divalent metal cation serves as cofactor.

The catalysed reaction is 4-hydroxy-2-oxoheptanedioate = succinate semialdehyde + pyruvate. It functions in the pathway aromatic compound metabolism; 4-hydroxyphenylacetate degradation; pyruvate and succinate semialdehyde from 4-hydroxyphenylacetate: step 7/7. Functionally, catalyzes the reversible retro-aldol cleavage of 4-hydroxy-2-ketoheptane-1,7-dioate (HKHD) to pyruvate and succinic semialdehyde. The polypeptide is 4-hydroxy-2-oxo-heptane-1,7-dioate aldolase (Salmonella choleraesuis (strain SC-B67)).